A 313-amino-acid chain; its full sequence is MERTMTPIKAAIIGSGNIGTDLMIKILRTGSGIEMGALVGVDPASDGLERARRLGVFTTHEGLDGLRRSPIYKDIGIVFDATSAKAHERHAEQLRQDGKRAIDLTPAAVGPYIVPVVNLEENLNAVNVNMVTCGGQATIPIVAAVARVAPVPYAEIVASIASRSAGPGTRANIDEFTETTARAIEVVGGARRGKAIIVLNPAEPPLIMRDTVYCLALTQDQDAVRRSIHDMIDRVRGYVPGYRLKQEVQFEPLRDARAVGGEEDGPALKVSVFLEVEGAGHYLPSYAGNLDIMTSAALAVAERFARTLIEENA.

15–18 provides a ligand contact to NAD(+); that stretch reads SGNI. The active-site Acyl-thioester intermediate is the C133. NAD(+) is bound by residues 164-172 and N289; that span reads SAGPGTRAN.

This sequence belongs to the acetaldehyde dehydrogenase family.

It carries out the reaction acetaldehyde + NAD(+) + CoA = acetyl-CoA + NADH + H(+). This Rhizobium rhizogenes (strain K84 / ATCC BAA-868) (Agrobacterium radiobacter) protein is Acetaldehyde dehydrogenase.